A 293-amino-acid chain; its full sequence is Ribosomal RNA small subunit methyltransferase A (293 aa).

Asn33, Val35, Gly60, Glu81, Asp111, and Asn130 together coordinate S-adenosyl-L-methionine.

The protein belongs to the class I-like SAM-binding methyltransferase superfamily. rRNA adenine N(6)-methyltransferase family. RsmA subfamily.

It is found in the cytoplasm. The enzyme catalyses adenosine(1518)/adenosine(1519) in 16S rRNA + 4 S-adenosyl-L-methionine = N(6)-dimethyladenosine(1518)/N(6)-dimethyladenosine(1519) in 16S rRNA + 4 S-adenosyl-L-homocysteine + 4 H(+). In terms of biological role, specifically dimethylates two adjacent adenosines (A1518 and A1519) in the loop of a conserved hairpin near the 3'-end of 16S rRNA in the 30S particle. May play a critical role in biogenesis of 30S subunits. In Corynebacterium glutamicum (strain ATCC 13032 / DSM 20300 / JCM 1318 / BCRC 11384 / CCUG 27702 / LMG 3730 / NBRC 12168 / NCIMB 10025 / NRRL B-2784 / 534), this protein is Ribosomal RNA small subunit methyltransferase A.